We begin with the raw amino-acid sequence, 472 residues long: Adenosylhomocysteinase (472 aa).

Substrate is bound by residues Thr64, Asp138, and Glu198. Position 199–201 (199–201 (TTT)) interacts with NAD(+). Substrate-binding residues include Lys228 and Asp232. NAD(+) contacts are provided by residues Asn233, 262–267 (GFGDVG), Glu285, Asn320, 341–343 (IGH), and Asn386.

This sequence belongs to the adenosylhomocysteinase family. It depends on NAD(+) as a cofactor.

It is found in the cytoplasm. The catalysed reaction is S-adenosyl-L-homocysteine + H2O = L-homocysteine + adenosine. It functions in the pathway amino-acid biosynthesis; L-homocysteine biosynthesis; L-homocysteine from S-adenosyl-L-homocysteine: step 1/1. In terms of biological role, may play a key role in the regulation of the intracellular concentration of adenosylhomocysteine. This is Adenosylhomocysteinase from Prochlorococcus marinus subsp. pastoris (strain CCMP1986 / NIES-2087 / MED4).